The primary structure comprises 85 residues: Large ribosomal subunit protein bL27 (85 aa).

The interval 1-20 (MATKKAGGSTKNGRDSNPKM) is disordered.

Belongs to the bacterial ribosomal protein bL27 family.

The protein is Large ribosomal subunit protein bL27 of Acinetobacter baumannii (strain AB307-0294).